A 546-amino-acid polypeptide reads, in one-letter code: Interleukin-20 receptor subunit alpha (546 aa).

Positions 1–32 are cleaved as a signal peptide; sequence MHTPGTPAPGHPDPPPLLLLTLLLLLAASGRA. Over 33-253 the chain is Extracellular; it reads VPCVFCGLPK…EVQTSAWKAK (221 aa). 2 consecutive Fibronectin type-III domains span residues 42 to 138 and 139 to 245; these read KPTN…FLET and QVSP…TLEV. Asparagine 45, asparagine 86, asparagine 94, asparagine 185, and asparagine 203 each carry an N-linked (GlcNAc...) asparagine glycan. A disulfide bridge connects residues cysteine 90 and cysteine 98. Cysteine 218 and cysteine 239 are joined by a disulfide. Residues 254–274 traverse the membrane as a helical segment; it reads VIFWYVFLTSVIVFLFSAIGY. Residues 275 to 546 are Cytoplasmic-facing; the sequence is LVYRYIHVGK…EWGLHVQMES (272 aa).

The protein belongs to the type II cytokine receptor family. As to quaternary structure, heterodimer with IL20RB and heterodimer with IL10RB.

The protein localises to the membrane. Functionally, the IL20RA/IL20RB dimer is a receptor for IL19, IL20 and IL24. The IL20RA/IL10RB dimer is a receptor for IL26. The chain is Interleukin-20 receptor subunit alpha (Il20ra) from Mus musculus (Mouse).